The sequence spans 442 residues: Exodeoxyribonuclease 7 large subunit (442 aa).

Positions 1–38 are disordered; the sequence is MSDSTQFSLFDSGDDEPAKVTAPKRKVARKKRSSSSSD. Residues 22–33 are compositionally biased toward basic residues; it reads APKRKVARKKRS.

Belongs to the XseA family. As to quaternary structure, heterooligomer composed of large and small subunits.

The protein resides in the cytoplasm. It carries out the reaction Exonucleolytic cleavage in either 5'- to 3'- or 3'- to 5'-direction to yield nucleoside 5'-phosphates.. Its function is as follows. Bidirectionally degrades single-stranded DNA into large acid-insoluble oligonucleotides, which are then degraded further into small acid-soluble oligonucleotides. The polypeptide is Exodeoxyribonuclease 7 large subunit (Rhodopirellula baltica (strain DSM 10527 / NCIMB 13988 / SH1)).